Consider the following 659-residue polypeptide: MTVYLPDGKPLELPEGATAKDVARALGEGWERRAVGAIVDGELYDLLKPLPQGAKVRLLTEKDPEFQTLFRHTLAHVLAQAVKEFFREKGYDPESVRLGVGPVIEKGFYYDIEAPEPLSDEDLPAIEAKMREILKRDLPLRRFVLSREEALARYRGKDPYKTELVLEIPEGEEISFYQQGDEAYGFTDLCRGPHVPSTGRIPPHFKLTHVAGAYWRGDENRPMLQRVYGVAFRTAEELKEYLWQLEEAKKRDHRRLGRELELFLIDPLVGKGLVLWLPKGNVVREELMAFMREEQVRRGYQLVTTPHIGSLELYKTSGHYPYYAESQFPPISFKERGEEEEYLLKPMNCPHHIRIYAYRKRSYRELPLRLAEFGTVYRYEKAGELLGLTRVRGFTQDDAHIFCTPEEVKGEFLGVLDLVLKVFATLGLKDYRARIGVRDPKSDKYVGDEAKWALAERQIEEAAAEAGLRYTVEEGDAAFYGPKLDFVVKDALGREWQLGTIQVDYNLPERFGLTYVGKDGEEHRPVMLHRAPFGSLERFIGILIEHFAGDFPLWLAPVQAVVVPVSEKQEDYAREVAGRLKEAGLRAEADTRPERMQARIRDAEVQKVPYILVVGEREKAEGAVSVRRRKKGNLGTMPLAAFLEGALREYRERRLEPVF.

The TGS domain occupies 1–60 (MTVYLPDGKPLELPEGATAKDVARALGEGWERRAVGAIVDGELYDLLKPLPQGAKVRLLT). Catalytic stretches follow at residues 234–548 (TAEE…EHFA) and 252–552 (DHRR…GDFP). Residues Cys-349, His-400, and His-529 each coordinate Zn(2+).

Belongs to the class-II aminoacyl-tRNA synthetase family. In terms of assembly, homodimer. Zn(2+) is required as a cofactor.

It localises to the cytoplasm. It catalyses the reaction tRNA(Thr) + L-threonine + ATP = L-threonyl-tRNA(Thr) + AMP + diphosphate + H(+). Functionally, catalyzes the attachment of threonine to tRNA(Thr) in a two-step reaction: L-threonine is first activated by ATP to form Thr-AMP and then transferred to the acceptor end of tRNA(Thr). Also edits incorrectly charged L-seryl-tRNA(Thr). The chain is Threonine--tRNA ligase from Thermus thermophilus (strain ATCC 27634 / DSM 579 / HB8).